Here is a 379-residue protein sequence, read N- to C-terminus: Histidinol-phosphate aminotransferase (379 aa).

K236 is modified (N6-(pyridoxal phosphate)lysine).

Belongs to the class-II pyridoxal-phosphate-dependent aminotransferase family. Histidinol-phosphate aminotransferase subfamily. In terms of assembly, homodimer. The cofactor is pyridoxal 5'-phosphate.

It catalyses the reaction L-histidinol phosphate + 2-oxoglutarate = 3-(imidazol-4-yl)-2-oxopropyl phosphate + L-glutamate. It participates in amino-acid biosynthesis; L-histidine biosynthesis; L-histidine from 5-phospho-alpha-D-ribose 1-diphosphate: step 7/9. This chain is Histidinol-phosphate aminotransferase, found in Desulfotalea psychrophila (strain LSv54 / DSM 12343).